The chain runs to 78 residues: Protein SlyX homolog (78 aa).

This sequence belongs to the SlyX family.

The protein is Protein SlyX homolog of Xylella fastidiosa (strain 9a5c).